Consider the following 94-residue polypeptide: DNA-directed RNA polymerase subunit omega (94 aa).

The protein belongs to the RNA polymerase subunit omega family. The RNAP catalytic core consists of 2 alpha, 1 beta, 1 beta' and 1 omega subunit. When a sigma factor is associated with the core the holoenzyme is formed, which can initiate transcription.

The catalysed reaction is RNA(n) + a ribonucleoside 5'-triphosphate = RNA(n+1) + diphosphate. Promotes RNA polymerase assembly. Latches the N- and C-terminal regions of the beta' subunit thereby facilitating its interaction with the beta and alpha subunits. The protein is DNA-directed RNA polymerase subunit omega of Bifidobacterium longum subsp. infantis (strain ATCC 15697 / DSM 20088 / JCM 1222 / NCTC 11817 / S12).